Here is a 573-residue protein sequence, read N- to C-terminus: Probable CoA ligase CCL13 (573 aa).

ATP contacts are provided by residues 216–224 (TSGTTARPK), 352–357 (HIYGLT), D449, 461–464 (LKDR), and K556. Positions 284 to 352 (SPKAIFDNIH…MEEMGFQVNH (69 aa)) are SBD1. Residues 353–429 (IYGLTETHGP…FRGNTVMSGY (77 aa)) are SBD2.

It belongs to the ATP-dependent AMP-binding enzyme family.

The protein resides in the cytoplasm. Its subcellular location is the cytosol. The protein is Probable CoA ligase CCL13 of Humulus lupulus (European hop).